A 90-amino-acid polypeptide reads, in one-letter code: Probable Fe(2+)-trafficking protein (90 aa).

The protein belongs to the Fe(2+)-trafficking protein family.

Functionally, could be a mediator in iron transactions between iron acquisition and iron-requiring processes, such as synthesis and/or repair of Fe-S clusters in biosynthetic enzymes. This chain is Probable Fe(2+)-trafficking protein, found in Idiomarina loihiensis (strain ATCC BAA-735 / DSM 15497 / L2-TR).